A 126-amino-acid chain; its full sequence is Aspartate 1-decarboxylase (126 aa).

The active-site Schiff-base intermediate with substrate; via pyruvic acid is S25. Pyruvic acid (Ser) is present on S25. A substrate-binding site is contributed by T57. The active-site Proton donor is Y58. Residue G73–A75 participates in substrate binding.

This sequence belongs to the PanD family. In terms of assembly, heterooctamer of four alpha and four beta subunits. Pyruvate is required as a cofactor. Is synthesized initially as an inactive proenzyme, which is activated by self-cleavage at a specific serine bond to produce a beta-subunit with a hydroxyl group at its C-terminus and an alpha-subunit with a pyruvoyl group at its N-terminus.

It is found in the cytoplasm. It catalyses the reaction L-aspartate + H(+) = beta-alanine + CO2. It participates in cofactor biosynthesis; (R)-pantothenate biosynthesis; beta-alanine from L-aspartate: step 1/1. Catalyzes the pyruvoyl-dependent decarboxylation of aspartate to produce beta-alanine. The chain is Aspartate 1-decarboxylase from Photorhabdus laumondii subsp. laumondii (strain DSM 15139 / CIP 105565 / TT01) (Photorhabdus luminescens subsp. laumondii).